The sequence spans 221 residues: Probable GTP-binding protein EngB (221 aa).

One can recognise an EngB-type G domain in the interval 37–219 (QGIEIALAGR…RAAIVKLLRE (183 aa)). GTP contacts are provided by residues 45-52 (GRSNVGKS), 72-76 (GRTQE), 97-100 (DMPG), 164-167 (TKTD), and 198-200 (TSS). Mg(2+)-binding residues include S52 and T74.

The protein belongs to the TRAFAC class TrmE-Era-EngA-EngB-Septin-like GTPase superfamily. EngB GTPase family. It depends on Mg(2+) as a cofactor.

Its function is as follows. Necessary for normal cell division and for the maintenance of normal septation. This Afipia carboxidovorans (strain ATCC 49405 / DSM 1227 / KCTC 32145 / OM5) (Oligotropha carboxidovorans) protein is Probable GTP-binding protein EngB.